The following is a 570-amino-acid chain: Capsid vertex component 2 (570 aa).

The tract at residues 1–54 (MALSGHVLIDPARLPRDTGPELMWAPSLRNSLRVSPEALELAEREAERARSERW) is interaction with major capsid protein/MCP. The interval 102–123 (QVRSPSTGGRSAPAPPSPSPAQ) is disordered.

The protein belongs to the herpesviridae CVC2 protein family. In terms of assembly, heterodimerizes with CVC1. Interacts with major capsid protein/MCP and triplex capsid protein 1/TRX1 at the pentamer vertices. Interacts with the large tegument protein/LTP.

It localises to the virion. The protein localises to the host nucleus. Functionally, capsid vertex-specific component that plays a role during viral DNA encapsidation, assuring correct genome cleavage and presumably stabilizing capsids that contain full-length viral genomes. Participates in the interaction between the capsid and the tegument through interaction with the large tegument protein/LTP. This chain is Capsid vertex component 2, found in Homo sapiens (Human).